We begin with the raw amino-acid sequence, 341 residues long: Pyrophosphate--fructose 6-phosphate 1-phosphotransferase (341 aa).

Residue glycine 10 participates in diphosphate binding. Glutamate 103 lines the Mg(2+) pocket. Residues 125–127 (TID), arginine 162, 169–171 (MGR), glutamate 221, arginine 265, and 271–274 (HVQR) each bind substrate. Aspartate 127 serves as the catalytic Proton acceptor.

The protein belongs to the phosphofructokinase type A (PFKA) family. Mixed-substrate PFK group III subfamily. Homodimer or homotetramer. Mg(2+) serves as cofactor.

Its subcellular location is the cytoplasm. The catalysed reaction is beta-D-fructose 6-phosphate + diphosphate = beta-D-fructose 1,6-bisphosphate + phosphate + H(+). It functions in the pathway carbohydrate degradation; glycolysis; D-glyceraldehyde 3-phosphate and glycerone phosphate from D-glucose: step 3/4. With respect to regulation, non-allosteric. Its function is as follows. Catalyzes the phosphorylation of D-fructose 6-phosphate, the first committing step of glycolysis. Uses inorganic phosphate (PPi) as phosphoryl donor instead of ATP like common ATP-dependent phosphofructokinases (ATP-PFKs), which renders the reaction reversible, and can thus function both in glycolysis and gluconeogenesis. Consistently, PPi-PFK can replace the enzymes of both the forward (ATP-PFK) and reverse (fructose-bisphosphatase (FBPase)) reactions. In Amycolatopsis mediterranei (strain S699) (Nocardia mediterranei), this protein is Pyrophosphate--fructose 6-phosphate 1-phosphotransferase.